We begin with the raw amino-acid sequence, 348 residues long: Sesquiterpene synthase MGU_11447 (348 aa).

Asp-91 and Asp-96 together coordinate Mg(2+). The DDXXXD motif signature appears at Asp-91–Asp-96. Arg-184 is a substrate binding site. Mg(2+) is bound by residues Asn-230, Ser-234, and Glu-238.

It belongs to the terpene synthase family. Mg(2+) serves as cofactor.

It carries out the reaction (2E,6E)-farnesyl diphosphate + H2O = (+)-corvol ether B + diphosphate. The catalysed reaction is (2E,6E)-farnesyl diphosphate + H2O = (+)-corvol ether A + diphosphate. Its function is as follows. Terpene synthase that catalyzes the conversion of (2E,6E)-farnesyl diphosphate (FPP) into sesquiterpenes which are important for fungi-environment interactions. Produces a mixture consisting of 8 sesquiterpenes including corvol ethers A and B, as well as traces of epizonarene, gamma-cadinene, delta-cadinene, alpha-cadinene, alpha-cadinol, and an unidentified sesquiterpene. Produces both corvol ether A and corvol ether B in similar concentrations. This is Sesquiterpene synthase MGU_11447 from Metarhizium guizhouense (strain ARSEF 977).